The sequence spans 333 residues: Adenosine deaminase (333 aa).

Residues His-12 and His-14 each contribute to the Zn(2+) site. Residues His-14, Asp-16, and Gly-170 each coordinate substrate. Residue His-197 coordinates Zn(2+). Glu-200 acts as the Proton donor in catalysis. Asp-278 lines the Zn(2+) pocket. Residue Asp-279 participates in substrate binding.

The protein belongs to the metallo-dependent hydrolases superfamily. Adenosine and AMP deaminases family. Adenosine deaminase subfamily. Zn(2+) serves as cofactor.

The catalysed reaction is adenosine + H2O + H(+) = inosine + NH4(+). It catalyses the reaction 2'-deoxyadenosine + H2O + H(+) = 2'-deoxyinosine + NH4(+). In terms of biological role, catalyzes the hydrolytic deamination of adenosine and 2-deoxyadenosine. This Salmonella paratyphi C (strain RKS4594) protein is Adenosine deaminase.